The following is a 509-amino-acid chain: H/ACA ribonucleoprotein complex subunit DKC1 (509 aa).

Positions 1 to 24 (MADAEVITFPKKHKKKKDRKPLQE) are disordered. Ala-2 bears the N-acetylalanine mark. The tract at residues 2–21 (ADAEVITFPKKHKKKKDRKP) is nucleolar localization. Positions 10–19 (PKKHKKKKDR) are enriched in basic residues. Glycyl lysine isopeptide (Lys-Gly) (interchain with G-Cter in SUMO2) cross-links involve residues Lys-20, Lys-39, and Lys-43. The Nucleophile role is filled by Asp-125. Lys-191 participates in a covalent cross-link: Glycyl lysine isopeptide (Lys-Gly) (interchain with G-Cter in SUMO2). In terms of domain architecture, PUA spans 297–372 (KRLVMKDSAV…VAKIKRVIME (76 aa)). Phosphoserine is present on Ser-387. Lys-394 participates in a covalent cross-link: Glycyl lysine isopeptide (Lys-Gly) (interchain with G-Cter in SUMO2). Lys-413 participates in a covalent cross-link: Glycyl lysine isopeptide (Lys-Gly) (interchain with G-Cter in SUMO1); alternate. A Glycyl lysine isopeptide (Lys-Gly) (interchain with G-Cter in SUMO2); alternate cross-link involves residue Lys-413. Lys-424 is covalently cross-linked (Glycyl lysine isopeptide (Lys-Gly) (interchain with G-Cter in SUMO2)). Positions 446–509 (KRKRDSESES…KVKVVEEMSE (64 aa)) are nuclear and nucleolar localization. The tract at residues 447–509 (RKRDSESESD…KVKVVEEMSE (63 aa)) is disordered. Phosphoserine occurs at positions 451, 453, and 455. A Phosphothreonine modification is found at Thr-458. Over residues 466–476 (EKKKKKDKKPK) the composition is skewed to basic residues. At Ser-481 the chain carries Phosphoserine. The residue at position 485 (Thr-485) is a Phosphothreonine. A Phosphoserine modification is found at Ser-508.

It belongs to the pseudouridine synthase TruB family. Part of the H/ACA small nucleolar ribonucleoprotein (H/ACA snoRNP) complex, which contains NHP2/NOLA2, GAR1/NOLA1, NOP10/NOLA3, and DKC1/NOLA4, which is presumed to be the catalytic subunit. The complex contains a stable core formed by binding of one or two NOP10-DKC1 heterodimers to NHP2; GAR1 subsequently binds to this core via DKC1. The complex binds a box H/ACA small nucleolar RNA (snoRNA), which may target the specific site of modification within the RNA substrate. During assembly, the complex contains NAF1 instead of GAR1/NOLA1. The complex also interacts with TERC, which contains a 3'-terminal domain related to the box H/ACA snoRNAs. Specific interactions with snoRNAs or TERC are mediated by GAR1 and NHP2. Associates with NOLC1/NOPP140. H/ACA snoRNPs interact with the SMN complex, consisting of SMN1 or SMN2, GEMIN2/SIP1, DDX20/GEMIN3, and GEMIN4. This is mediated by interaction between GAR1 and SMN1 or SMN2. The SMN complex may be required for correct assembly of the H/ACA snoRNP complex. Component of the telomerase holoenzyme complex composed of one molecule of TERT, one molecule of WRAP53/TCAB1, two molecules of H/ACA ribonucleoprotein complex subunits DKC1, NOP10, NHP2 and GAR1, and a telomerase RNA template component (TERC). The telomerase holoenzyme complex is associated with TEP1, SMG6/EST1A and POT1. Interacts with SHQ1; this interaction may lead to the stabilization of DKC1, from the time of its synthesis until its association with NOP10, NHP2, and NAF1 at the nascent H/ACA RNA. Interacts with HMBOX1. Interacts with DHX36. As to expression, ubiquitously expressed, with elevated levels in Purkinje cells, the olfactory bulb, and Leydig cells of the testis.

Its subcellular location is the nucleus. The protein localises to the nucleolus. It localises to the cajal body. The enzyme catalyses uridine in 5S rRNA = pseudouridine in 5S rRNA. Catalytic subunit of H/ACA small nucleolar ribonucleoprotein (H/ACA snoRNP) complex, which catalyzes pseudouridylation of rRNA. This involves the isomerization of uridine such that the ribose is subsequently attached to C5, instead of the normal N1. Each rRNA can contain up to 100 pseudouridine ('psi') residues, which may serve to stabilize the conformation of rRNAs. Required for ribosome biogenesis and telomere maintenance. Also required for correct processing or intranuclear trafficking of TERC, the RNA component of the telomerase reverse transcriptase (TERT) holoenzyme. The chain is H/ACA ribonucleoprotein complex subunit DKC1 (Dkc1) from Mus musculus (Mouse).